The sequence spans 1066 residues: Probable sucrose-phosphate synthase 4 (1066 aa).

Disordered stretches follow at residues 132–166 (YAAA…GRMP) and 688–714 (PRHP…SLRD). Basic and acidic residues predominate over residues 143–162 (EGEKGENINESSSTHDESTR).

Belongs to the glycosyltransferase 1 family. As to quaternary structure, homodimer or homotetramer. In terms of tissue distribution, expressed in germinating seeds.

The catalysed reaction is beta-D-fructose 6-phosphate + UDP-alpha-D-glucose = sucrose 6(F)-phosphate + UDP + H(+). The protein operates within glycan biosynthesis; sucrose biosynthesis; sucrose from D-fructose 6-phosphate and UDP-alpha-D-glucose: step 1/2. Activity is regulated by phosphorylation and moderated by concentration of metabolites and light. Functionally, plays a role in photosynthetic sucrose synthesis by catalyzing the rate-limiting step of sucrose biosynthesis from UDP-glucose and fructose- 6-phosphate. Involved in the regulation of carbon partitioning in the leaves of plants. May regulate the synthesis of sucrose and therefore play a major role as a limiting factor in the export of photoassimilates out of the leaf. Plays a role for sucrose availability that is essential for plant growth and fiber elongation. The sequence is that of Probable sucrose-phosphate synthase 4 (SPS4) from Oryza sativa subsp. japonica (Rice).